The following is a 165-amino-acid chain: Hemolysin, heat labile (165 aa).

Residues Cys151 and Cys161 are joined by a disulfide bond.

Belongs to the TDH hemolysin family. As to quaternary structure, homodimer.

Bacterial hemolysins are exotoxins that attack blood cell membranes and cause cell rupture by mechanisms not clearly defined. This chain is Hemolysin, heat labile, found in Grimontia hollisae (Vibrio hollisae).